Reading from the N-terminus, the 223-residue chain is MARFEPYNYNNGHDPFFAHINQNPELINLDLPASTPSSFMLFSNGALVDANHNNSHFFPNLLHGNTRRKGNKEESGSKRRRKRSEEEEAMNGDETQKPKDVVHVRAKRGQATDSHSLAERVRREKINERLKCLQDLVPGCYKAMGMAVMLDVIIDYVRSLQNQIEFLSMKLSAASACYDLNSLDIEPTDIFQGGNIHSAAEMERILRESVGTQPPNFSSTLPF.

The segment at 58-100 (FPNLLHGNTRRKGNKEESGSKRRRKRSEEEEAMNGDETQKPKD) is disordered. Residues 110–160 (QATDSHSLAERVRREKINERLKCLQDLVPGCYKAMGMAVMLDVIIDYVRSL) form the bHLH domain.

Homodimer. As to expression, expressed in leaves, stems, and flowers.

It is found in the nucleus. The protein is Transcription factor bHLH75 (BHLH75) of Arabidopsis thaliana (Mouse-ear cress).